The sequence spans 253 residues: 5-oxoprolinase subunit A (253 aa).

This sequence belongs to the LamB/PxpA family. In terms of assembly, forms a complex composed of PxpA, PxpB and PxpC.

The catalysed reaction is 5-oxo-L-proline + ATP + 2 H2O = L-glutamate + ADP + phosphate + H(+). Functionally, catalyzes the cleavage of 5-oxoproline to form L-glutamate coupled to the hydrolysis of ATP to ADP and inorganic phosphate. This Bacillus licheniformis (strain ATCC 14580 / DSM 13 / JCM 2505 / CCUG 7422 / NBRC 12200 / NCIMB 9375 / NCTC 10341 / NRRL NRS-1264 / Gibson 46) protein is 5-oxoprolinase subunit A.